A 147-amino-acid chain; its full sequence is UPF0178 protein VS_2364 (147 aa).

It belongs to the UPF0178 family.

The polypeptide is UPF0178 protein VS_2364 (Vibrio atlanticus (strain LGP32) (Vibrio splendidus (strain Mel32))).